A 460-amino-acid chain; its full sequence is Baeyer-Villiger oxidase AgnL3 (460 aa).

Belongs to the questin oxidase family. NADPH is required as a cofactor.

It functions in the pathway secondary metabolite biosynthesis. In terms of biological role, baeyer-Villiger oxidase; part of the gene cluster that mediates the biosynthesis of agnestins, dihydroxy-xanthone metabolites. The pathway begins with the assembly and cyclization of atrochrysone thioester by the non-reducing polyketide synthase Agnpks1. The atrochrysone carboxyl ACP thioesterase AgnL7 then breaks the thioester bond and releases the atrochrysone carboxylic acid as the first enzyme-free intermediate. The decarboxylase AgnL1 then catalyzes the concerted decarboxylation-elimination required to convert atochrysone carboxylic acid into emodin anthrone, which is further oxidized to emodin by the anthrone oxygenase AgnL2. Emodin then undergoes reduction catalyzed by the oxidoreductase AgnL4 to yield the dihydroquinone tautomer which is the substrate for reduction by the short chain dehydrogenase AgnL6 reduction to produce hydroxyketone, followed by AgnL8 dehydration and likely spontaneous autoxidation to chrysophanol. Baeyer-Villiger oxidation by the oxidase AgnL3 leads to monodictyphenone via cleavage of the C-10/C-10a bond of chrysophanol. Alternative cleavage at the C-4a/C-10 bond of chrysophanol also leads to the formation some cephalone F. Further conversion to agnestins A and B, requires reduction to dihydro-monodictyphenone, oxidation to agnestin C probably via an epoxide, and rearrangement to either agnestin A or agnestin B directly, although agnestin A or agnestin B can also interconvert. Within the cluster, AgnR1 is the only unassigned oxidoreductase present which could be involved in this conversion. However, AgnR1 seems not to be involved in this step, and thus genes involved in the proposed oxidation/reduction may be located elsewhere on the genome. Further agnestin A derivatives are probably formed by spontaneous decarboxylations, dehydrations and methanolysis reactions. This chain is Baeyer-Villiger oxidase AgnL3, found in Paecilomyces divaricatus (Penicillium divaricatum).